Reading from the N-terminus, the 460-residue chain is Glycine--tRNA ligase (460 aa).

Residues Arg99 and Glu162 each contribute to the substrate site. Residues 194 to 196 (RNE), 204 to 209 (FRTREF), 281 to 282 (EL), and 325 to 328 (GVGR) contribute to the ATP site. 209-213 (FEQME) serves as a coordination point for substrate. Residue 321 to 325 (EPAAG) participates in substrate binding.

It belongs to the class-II aminoacyl-tRNA synthetase family. In terms of assembly, homodimer.

It is found in the cytoplasm. The enzyme catalyses tRNA(Gly) + glycine + ATP = glycyl-tRNA(Gly) + AMP + diphosphate. Catalyzes the attachment of glycine to tRNA(Gly). The chain is Glycine--tRNA ligase from Streptomyces coelicolor (strain ATCC BAA-471 / A3(2) / M145).